The sequence spans 453 residues: MSPQTETKAGVGFKAGVKEYKLTYYTPEYETKDTDILAAFRVTPQPGVPPEERGAAVAAESSTGTWTTVWTDGLTSLDRYKGRCYHIEPVPGEEEQFIAYVAYPLDLFEEGSVTNMFTSIVGNVFGFKALRALRLEDLRIPVAYVKTFQGPPHGIQVERDKLNKYGRPLLGCTIKPKLGLSAKNYGRAVYECLRGGLDFTKDDENVNSQPFMRWRDRFLFCAEAIYKSQAETGEIKGHYLNATAGTCEEMIKRAVFARELGVPIVMHDYLTGGFTANTSLSHYCRDNGLLLHIHRAMHAVIDRQKNHGMHFRVLAKALRMSGGDHVHSGTVVGKLEGERDITLGFVDLLRDDYIEKDRSRGVYFTQDWVSLPGVLPVASRGIHVWHMPALTEIFGDDSVLQFGGGTLGHPWGNAPGAVANRVALEACVKARNEGRDLAVEGGEIIREACKWSP.

Residues 1-2 constitute a propeptide that is removed on maturation; the sequence is MS. Proline 3 is subject to N-acetylproline. Lysine 14 carries the post-translational modification N6,N6,N6-trimethyllysine. Residues asparagine 123 and threonine 173 each coordinate substrate. The active-site Proton acceptor is the lysine 175. Lysine 177 is a binding site for substrate. Residues lysine 201, aspartate 203, and glutamate 204 each contribute to the Mg(2+) site. Lysine 201 carries the N6-carboxylysine modification. Histidine 294 acts as the Proton acceptor in catalysis. Arginine 295, histidine 327, and serine 379 together coordinate substrate.

The protein belongs to the RuBisCO large chain family. Type I subfamily. As to quaternary structure, heterohexadecamer of 8 large chains and 8 small chains; disulfide-linked. The disulfide link is formed within the large subunit homodimers. The cofactor is Mg(2+). Post-translationally, the disulfide bond which can form in the large chain dimeric partners within the hexadecamer appears to be associated with oxidative stress and protein turnover.

The protein localises to the plastid. The protein resides in the chloroplast. The catalysed reaction is 2 (2R)-3-phosphoglycerate + 2 H(+) = D-ribulose 1,5-bisphosphate + CO2 + H2O. It catalyses the reaction D-ribulose 1,5-bisphosphate + O2 = 2-phosphoglycolate + (2R)-3-phosphoglycerate + 2 H(+). In terms of biological role, ruBisCO catalyzes two reactions: the carboxylation of D-ribulose 1,5-bisphosphate, the primary event in carbon dioxide fixation, as well as the oxidative fragmentation of the pentose substrate in the photorespiration process. Both reactions occur simultaneously and in competition at the same active site. The sequence is that of Ribulose bisphosphate carboxylase large chain from Galium album (White bedstraw).